A 343-amino-acid polypeptide reads, in one-letter code: Phosphoglycerate mutase-like protein 2 (343 aa).

The N-terminal 35 residues, 1 to 35, are a transit peptide targeting the chloroplast; sequence MIHQSMTSNLSFYISSVSHLSSPLPSLSRLSLRCC. H65 serves as the catalytic Tele-phosphohistidine intermediate. E177 (proton donor/acceptor) is an active-site residue. Residues 322–343 form a disordered region; it reads MTNYPGTILTGEDASSDIADQK.

This sequence belongs to the phosphoglycerate mutase family.

The protein resides in the plastid. Its subcellular location is the chloroplast. Its function is as follows. May play a role in carbohydrates metabolism. This is Phosphoglycerate mutase-like protein 2 from Arabidopsis thaliana (Mouse-ear cress).